The following is a 277-amino-acid chain: Ras suppressor protein 1 (277 aa).

The disordered stretch occupies residues 1–23 (MSKSLKKLVEESREKNQPEVDMS). An N-acetylserine modification is found at Ser-2. A compositionally biased stretch (basic and acidic residues) spans 7–23 (KLVEESREKNQPEVDMS). LRR repeat units follow at residues 41-63 (HITQLVLSHNKLTTVPPNVAELK), 64-85 (NLEVLNFFNNQIEELPTQISSL), 87-108 (KLKHLNLGMNRLNTLPRGFGSS), 110-133 (LLEVLELTYNNLNEHSLPGNFFYL), 135-156 (TLRALYLSDNDFEILPPDIGKL), 158-179 (KLQILSLRDNDLISLPKEIGEL), and 181-202 (QLKELHIQGNRLTVLPPELGNL). Positions 250–277 (MQANPEPPKKNNDKSKKISRKPLAAKNK) are disordered. Positions 256–265 (PPKKNNDKSK) are enriched in basic and acidic residues.

Its function is as follows. Potentially plays a role in the Ras signal transduction pathway. Capable of suppressing v-Ras transformation in vitro. The chain is Ras suppressor protein 1 (Rsu1) from Mus musculus (Mouse).